The sequence spans 240 residues: Extracellular superoxide dismutase [Cu-Zn] (240 aa).

Positions 1 to 18 (MLALLCSCLLLAAGASDA) are cleaved as a signal peptide. 2 cysteine pairs are disulfide-bonded: Cys-63–Cys-208 and Cys-125–Cys-207. Asn-107 carries an N-linked (GlcNAc...) asparagine glycan. The Cu cation site is built by His-114, His-116, and His-131. Zn(2+) is bound by residues His-131, His-139, His-142, and Asp-145. His-181 contributes to the Cu cation binding site. 2 N-linked (Glc) (glycation) lysine; in vitro glycosylation sites follow: Lys-229 and Lys-230.

Belongs to the Cu-Zn superoxide dismutase family. Homotetramer. Directly interacts with ATP7A; this interaction is copper-dependent and is required for SOD3 activity. Requires Cu cation as cofactor. Zn(2+) serves as cofactor. In terms of tissue distribution, expressed in blood vessels, heart, lung, kidney and placenta. Major SOD isoenzyme in extracellular fluids such as plasma, lymph and synovial fluid.

The protein resides in the secreted. It localises to the extracellular space. It is found in the golgi apparatus. The protein localises to the trans-Golgi network. The catalysed reaction is 2 superoxide + 2 H(+) = H2O2 + O2. Functionally, protect the extracellular space from toxic effect of reactive oxygen intermediates by converting superoxide radicals into hydrogen peroxide and oxygen. This Homo sapiens (Human) protein is Extracellular superoxide dismutase [Cu-Zn] (SOD3).